Here is a 506-residue protein sequence, read N- to C-terminus: Subtilisin-like serine protease Cur l 4.0101 (506 aa).

The signal sequence occupies residues Met1–Ala15. A propeptide spans Ser16 to Leu135 (removed in mature form). The Inhibitor I9 domain occupies Ser43–Ile134. The interval His59–Arg79 is disordered. Residues Asn69–Arg79 show a composition bias toward basic and acidic residues. Residues Pro147–Ile453 enclose the Peptidase S8 domain. Catalysis depends on charge relay system residues Asp183 and His215. Asn245 and Asn285 each carry an N-linked (GlcNAc...) asparagine glycan. Ser381 functions as the Charge relay system in the catalytic mechanism. Asn448 carries an N-linked (GlcNAc...) asparagine glycan. Residues Thr459–Leu506 constitute a propeptide, removed in mature form.

The protein belongs to the peptidase S8 family.

Functionally, serine protease. The chain is Subtilisin-like serine protease Cur l 4.0101 from Cochliobolus lunatus (Filamentous fungus).